The chain runs to 119 residues: Probable prefoldin subunit 6 (119 aa).

The protein belongs to the prefoldin subunit beta family. In terms of assembly, heterohexamer of two PFD-alpha type and four PFD-beta type subunits. May interact with MSP1.

Its function is as follows. Binds specifically to cytosolic chaperonin (c-CPN) and transfers target proteins to it. Binds to nascent polypeptide chain and promotes folding in an environment in which there are many competing pathways for nonnative proteins. The chain is Probable prefoldin subunit 6 from Plasmodium falciparum (isolate 3D7).